The following is a 927-amino-acid chain: Roc-COR-CHAT protease (927 aa).

LRR repeat units lie at residues 38–61, 83–107, 109–125, and 127–151; these read AGQV…TEAQ, LPHL…GFRS, QQVY…VFEG, and CPAL…GFRA. Residues 152 to 170 are LRR 5; that stretch reads LKYIYATNNVLQKITFNRS. LRR repeat units follow at residues 171–194 and 195–217; these read MRLL…LSEI and ETME…IWDR. Positions 436-623 constitute a COR domain; it reads EWLGVKEDLN…ELRWKKGVVL (188 aa). Active-site residues include histidine 796 and cysteine 840.

Functionally, a dedicated protease for gasdermin bGSDM; cleaves the bGSDM precursor, releasing the pore-forming moiety, which integrates into the membrane and triggers cell death. Probably involved in defense against bacteriophages. Expression of bGSDM and this neighboring protease is highly toxic in E.coli. Cells expressing the gene pair stop dividing and lose membrane integrity. Both proteins are required to kill E.coli. The bGSDM recognition site is larger than the 8 residues surrounding the cleavage site; replacement of the endogenous recognition site by the Runella site (NRVLGENM) in a number of other bGSDMs is not sufficient for them to be cleaved. The chain is Roc-COR-CHAT protease from Runella zeae (strain ATCC BAA-293 / DSM 19591 / LMG 21438 / NS12).